The primary structure comprises 281 residues: Tryptophan synthase alpha chain (281 aa).

Active-site proton acceptor residues include Glu49 and Asp60.

Belongs to the TrpA family. In terms of assembly, tetramer of two alpha and two beta chains.

It catalyses the reaction (1S,2R)-1-C-(indol-3-yl)glycerol 3-phosphate + L-serine = D-glyceraldehyde 3-phosphate + L-tryptophan + H2O. It functions in the pathway amino-acid biosynthesis; L-tryptophan biosynthesis; L-tryptophan from chorismate: step 5/5. Its function is as follows. The alpha subunit is responsible for the aldol cleavage of indoleglycerol phosphate to indole and glyceraldehyde 3-phosphate. This is Tryptophan synthase alpha chain from Methanocaldococcus jannaschii (strain ATCC 43067 / DSM 2661 / JAL-1 / JCM 10045 / NBRC 100440) (Methanococcus jannaschii).